Consider the following 485-residue polypeptide: MSIRYESVENLLTLIKDKKIKPSDVVKDIYDAIEETDPTIKSFLALDKENAIKKAQELDELQAKDQMDGKLFGIPMGIKDNIITNGLETTCASKMLEGFVPIYESTVMEKLHNENAVLIGKLNMDEFAMGGSTETSISKKTVNPFDHKAVPGGSSGGSAAAVAAGLVPFSLGSDTGGSIRQPAAYCGVVGMKPTYGRVSRFGLVAFASSLDQIGPLTRNVKDNAIVLEAISGADANDSTSAPVDDVDFTSEIGKDIKGLKVALPKEYLGEGVADDVKEAVQNAVETLKSLGAVVEEVSLPNTKFGIPSYYVIASSEASSNLSRFDGIRYGYHSKEAHSLEELYKMSRSEGFGKEVKRRIFLGTFALSSGYYDAYYKKSQKVRTLIKNDFDKVFENYDVVVGPTAPTTAFNLGEEIDDPLTMYANDLLTTPVNLAGLPGISVPCGQSNGRPIGLQFIGKPFDEKTLYRVAYQYETQYNLHDVYEKL.

Active-site charge relay system residues include Lys-79 and Ser-154. The active-site Acyl-ester intermediate is the Ser-178.

This sequence belongs to the amidase family. GatA subfamily. As to quaternary structure, heterotrimer of A, B and C subunits.

It carries out the reaction L-glutamyl-tRNA(Gln) + L-glutamine + ATP + H2O = L-glutaminyl-tRNA(Gln) + L-glutamate + ADP + phosphate + H(+). In terms of biological role, allows the formation of correctly charged Gln-tRNA(Gln) through the transamidation of misacylated Glu-tRNA(Gln) in organisms which lack glutaminyl-tRNA synthetase. The reaction takes place in the presence of glutamine and ATP through an activated gamma-phospho-Glu-tRNA(Gln). This chain is Glutamyl-tRNA(Gln) amidotransferase subunit A, found in Staphylococcus aureus.